Reading from the N-terminus, the 86-residue chain is Large ribosomal subunit protein bL27 (86 aa).

Over residues 1–10 the composition is skewed to gly residues; sequence MAQKKGGGST. Residues 1 to 21 form a disordered region; it reads MAQKKGGGSTRNGRDSESKRL.

Belongs to the bacterial ribosomal protein bL27 family.

The chain is Large ribosomal subunit protein bL27 from Cupriavidus necator (strain ATCC 17699 / DSM 428 / KCTC 22496 / NCIMB 10442 / H16 / Stanier 337) (Ralstonia eutropha).